Here is a 427-residue protein sequence, read N- to C-terminus: Serine hydroxymethyltransferase (427 aa).

(6S)-5,6,7,8-tetrahydrofolate is bound by residues L122 and 126 to 128 (GHL). K231 bears the N6-(pyridoxal phosphate)lysine mark. (6S)-5,6,7,8-tetrahydrofolate-binding positions include E247 and 355–357 (SPF).

It belongs to the SHMT family. In terms of assembly, homodimer. The cofactor is pyridoxal 5'-phosphate.

The protein localises to the cytoplasm. The catalysed reaction is (6R)-5,10-methylene-5,6,7,8-tetrahydrofolate + glycine + H2O = (6S)-5,6,7,8-tetrahydrofolate + L-serine. It participates in one-carbon metabolism; tetrahydrofolate interconversion. Its pathway is amino-acid biosynthesis; glycine biosynthesis; glycine from L-serine: step 1/1. Its function is as follows. Catalyzes the reversible interconversion of serine and glycine with tetrahydrofolate (THF) serving as the one-carbon carrier. This reaction serves as the major source of one-carbon groups required for the biosynthesis of purines, thymidylate, methionine, and other important biomolecules. Also exhibits THF-independent aldolase activity toward beta-hydroxyamino acids, producing glycine and aldehydes, via a retro-aldol mechanism. The chain is Serine hydroxymethyltransferase from Crocosphaera subtropica (strain ATCC 51142 / BH68) (Cyanothece sp. (strain ATCC 51142)).